The chain runs to 689 residues: PR domain zinc finger protein 8 (689 aa).

The SET domain occupies Lys16 to Gly131. S-adenosyl-L-methionine is bound at residue Tyr130. The segment at Tyr155 to His183 adopts a C2H2-type 1 zinc-finger fold. 2 disordered regions span residues Ala185–Arg333 and Ser397–Arg506. A compositionally biased stretch (gly residues) spans Gln193–Lys210. Low complexity-rich tracts occupy residues Pro241–Ser258 and Gly273–Gly286. The span at Glu322–Arg333 shows a compositional bias: gly residues. Low complexity predominate over residues Ser423 to Ala433. Residues Thr472 to Gly491 show a composition bias toward gly residues. C2H2-type zinc fingers lie at residues Asn625–His648 and Leu666–His688.

It belongs to the class V-like SAM-binding methyltransferase superfamily. As to quaternary structure, interacts with EPM2A and NHLRC1. This interaction sequesters EPM2A and NHLRC1 to the nucleus. Interacts with BHLHE22. In terms of tissue distribution, expressed in brain, heart, skeletal muscle, testes, prostate.

It is found in the nucleus. Its function is as follows. Probable histone methyltransferase, preferentially acting on 'Lys-9' of histone H3. Involved in the control of steroidogenesis through transcriptional repression of steroidogenesis marker genes such as CYP17A1 and LHCGR. Forms with BHLHE22 a transcriptional repressor complex controlling genes involved in neural development and neuronal differentiation. In the retina, it is required for rod bipolar and type 2 OFF-cone bipolar cell survival. The polypeptide is PR domain zinc finger protein 8 (PRDM8) (Homo sapiens (Human)).